We begin with the raw amino-acid sequence, 473 residues long: Photosystem II CP43 reaction center protein (473 aa).

A propeptide spanning residues 1-14 (MKNLYSLRRFYHVE) is cleaved from the precursor. Residue threonine 15 is modified to N-acetylthreonine. Residue threonine 15 is modified to Phosphothreonine. Helical transmembrane passes span 69–93 (LFEVAHFVPEKPMYEQGLILLPHLA), 134–155 (LIGPETLEESFPFFGYVWKDKN), 178–200 (KARYLGGVYDTWAPGGGDVRVIT), 255–275 (KPFGWARRAFVWSGEAYLSYS), and 291–312 (WFNNTVYPSEFYGPTGPEASQA). Glutamate 367 contacts [CaMn4O5] cluster. A helical transmembrane segment spans residues 447–471 (RARAAAAGFEKGIDRDTEPTLFMRP).

The protein belongs to the PsbB/PsbC family. PsbC subfamily. In terms of assembly, PSII is composed of 1 copy each of membrane proteins PsbA, PsbB, PsbC, PsbD, PsbE, PsbF, PsbH, PsbI, PsbJ, PsbK, PsbL, PsbM, PsbT, PsbX, PsbY, PsbZ, Psb30/Ycf12, at least 3 peripheral proteins of the oxygen-evolving complex and a large number of cofactors. It forms dimeric complexes. It depends on Binds multiple chlorophylls and provides some of the ligands for the Ca-4Mn-5O cluster of the oxygen-evolving complex. It may also provide a ligand for a Cl- that is required for oxygen evolution. PSII binds additional chlorophylls, carotenoids and specific lipids. as a cofactor.

The protein localises to the plastid. The protein resides in the chloroplast thylakoid membrane. In terms of biological role, one of the components of the core complex of photosystem II (PSII). It binds chlorophyll and helps catalyze the primary light-induced photochemical processes of PSII. PSII is a light-driven water:plastoquinone oxidoreductase, using light energy to abstract electrons from H(2)O, generating O(2) and a proton gradient subsequently used for ATP formation. This chain is Photosystem II CP43 reaction center protein, found in Nephroselmis olivacea (Green alga).